A 128-amino-acid chain; its full sequence is Large ribosomal subunit protein bL17 (128 aa).

Belongs to the bacterial ribosomal protein bL17 family. In terms of assembly, part of the 50S ribosomal subunit. Contacts protein L32.

This chain is Large ribosomal subunit protein bL17, found in Pseudomonas syringae pv. syringae (strain B728a).